Consider the following 174-residue polypeptide: NADH-quinone oxidoreductase subunit C (174 aa).

Belongs to the complex I 30 kDa subunit family. NDH-1 is composed of 14 different subunits. Subunits NuoB, C, D, E, F, and G constitute the peripheral sector of the complex.

The protein resides in the cell membrane. It carries out the reaction a quinone + NADH + 5 H(+)(in) = a quinol + NAD(+) + 4 H(+)(out). Its function is as follows. NDH-1 shuttles electrons from NADH, via FMN and iron-sulfur (Fe-S) centers, to quinones in the respiratory chain. The immediate electron acceptor for the enzyme in this species is believed to be ubiquinone. Couples the redox reaction to proton translocation (for every two electrons transferred, four hydrogen ions are translocated across the cytoplasmic membrane), and thus conserves the redox energy in a proton gradient. This Roseiflexus castenholzii (strain DSM 13941 / HLO8) protein is NADH-quinone oxidoreductase subunit C.